We begin with the raw amino-acid sequence, 186 residues long: ATP-dependent protease subunit HslV (186 aa).

The active site involves Thr14. Residues Ala168, Cys171, and Thr174 each coordinate Na(+).

Belongs to the peptidase T1B family. HslV subfamily. In terms of assembly, a double ring-shaped homohexamer of HslV is capped on each side by a ring-shaped HslU homohexamer. The assembly of the HslU/HslV complex is dependent on binding of ATP.

It localises to the cytoplasm. It catalyses the reaction ATP-dependent cleavage of peptide bonds with broad specificity.. With respect to regulation, allosterically activated by HslU binding. Protease subunit of a proteasome-like degradation complex believed to be a general protein degrading machinery. The polypeptide is ATP-dependent protease subunit HslV (Methylorubrum extorquens (strain CM4 / NCIMB 13688) (Methylobacterium extorquens)).